An 823-amino-acid chain; its full sequence is Pentatricopeptide repeat-containing protein At4g33990 (823 aa).

16 PPR repeats span residues 85-115 (NVCI…IQNR), 116-151 (DVYA…GLTP), 152-183 (DYRT…GFMW), 184-214 (DVYV…MPVR), 215-249 (DMGS…DSVT), 252-280 (SLLS…GLES), 281-311 (ELFV…MYVR), 312-346 (DLIS…RIQP), 347-381 (DCLT…GWFL), 383-413 (DITI…LPNT), 414-448 (DVIS…GEIA), 450-484 (NQGT…GLYL), 485-515 (DVFV…IPRV), 516-550 (NSVP…GVKP), 551-581 (DHIT…MQTD), and 587-617 (SLKH…MSLQ). Residues 622 to 697 (IWGALLSACR…TPGWSSMEVD (76 aa)) are type E motif. Positions 698–728 (NKVEVFYTGNQTHPMYEEMYRELTALQAKLK) are type E(+) motif. Residues 729 to 823 (MIGYVPDHRF…NGVCSCGDYW (95 aa)) are type DYW motif.

Belongs to the PPR family. PCMP-H subfamily.

The sequence is that of Pentatricopeptide repeat-containing protein At4g33990 (EMB2758) from Arabidopsis thaliana (Mouse-ear cress).